We begin with the raw amino-acid sequence, 743 residues long: Dolichyl-phosphate-mannose--protein mannosyltransferase 5 (743 aa).

The Lumenal portion of the chain corresponds to 1-46; sequence MNKEHLLKVDPIPDVTIKRGPLRSFLITKPCDNLSSLRTVTSSKEK. Residue Asn33 is glycosylated (N-linked (GlcNAc...) asparagine). The helical transmembrane segment at 47–67 threads the bilayer; the sequence is LLVGCLLIFTAIVRLHNISLP. The Cytoplasmic portion of the chain corresponds to 68-129; the sequence is NSVVFGENEV…IGTEYTANVP (62 aa). Residues 130 to 150 form a helical membrane-spanning segment; it reads YVAMRFFSATLGIVSVLVLYL. At 151 to 158 the chain is on the lumenal side; sequence TLRVSGVK. A helical transmembrane segment spans residues 159 to 179; sequence IAVAAICAVCFAIENSFVTLS. A topological domain (cytoplasmic) is located at residue Arg180. Residues 181–201 traverse the membrane as a helical segment; sequence FTLIEGPFVFFMACAVYFFRR. Topologically, residues 202–231 are lumenal; sequence SELYLPNSCKANKSLLAASIALGFAVSSKW. N-linked (GlcNAc...) asparagine glycosylation occurs at Asn213. The helical transmembrane segment at 232–252 threads the bilayer; it reads AGLFTIAWAGIIVLWRVWFMI. Residues 253 to 264 lie on the Cytoplasmic side of the membrane; sequence GDLSRPIGSSIK. The chain crosses the membrane as a helical span at residues 265 to 285; it reads YMAFQFTCLLAIPAFIYFLIF. Residues 286-583 lie on the Lumenal side of the membrane; it reads SVHIKTLNVN…GREVYFLGNA (298 aa). The 55-residue stretch at 320-374 folds into the MIR 1 domain; sequence VAEVAVGSAVSLNHVGTAGGYLHSHLHNYPAGSMQQQVTLYPHIDQNNKWIIELA. N-linked (GlcNAc...) asparagine glycans are attached at residues Asn380 and Asn386. MIR domains are found at residues 384–444 and 454–510; these read FQNL…IEID and QEHI…IEEN. A helical transmembrane segment spans residues 584–604; that stretch reads VLWWSVTAFICTFIIGVAVEL. Over 605 to 623 the chain is Cytoplasmic; the sequence is LAWKLGVNILRDKHIINFH. The chain crosses the membrane as a helical span at residues 624-644; that stretch reads YQVFQYLLGFAAHYFPYFFVG. Topologically, residues 645 to 646 are lumenal; it reads QK. Residues 647–667 form a helical membrane-spanning segment; sequence LFLYDYLPAYYFGILAFGHAL. Residues 668–683 are Cytoplasmic-facing; the sequence is DLISTYISNKRNNTGY. Residues 684–704 form a helical membrane-spanning segment; it reads IVVAIFMVVCFYFFSEHSPLI. The Lumenal portion of the chain corresponds to 705-743; the sequence is YATGWSSNLCKRSKWLGSWDFYCNSLLLSDSHYELNAES.

The protein belongs to the glycosyltransferase 39 family. As to quaternary structure, PMT3 and PMT5 form a functional heterodimer. Also forms a minor complex with PMT2.

The protein resides in the endoplasmic reticulum membrane. The enzyme catalyses a di-trans,poly-cis-dolichyl beta-D-mannosyl phosphate + L-seryl-[protein] = 3-O-(alpha-D-mannosyl)-L-seryl-[protein] + a di-trans,poly-cis-dolichyl phosphate + H(+). It catalyses the reaction a di-trans,poly-cis-dolichyl beta-D-mannosyl phosphate + L-threonyl-[protein] = 3-O-(alpha-D-mannosyl)-L-threonyl-[protein] + a di-trans,poly-cis-dolichyl phosphate + H(+). It functions in the pathway protein modification; protein glycosylation. Functionally, protein O-mannosyltransferase involved in O-glycosylation which is essential for cell wall rigidity. Forms a heterodimeric complex with PMT3 and more rarely with PMT2 to transfer mannose from Dol-P-mannose to Ser or Thr residues on proteins. This Saccharomyces cerevisiae (strain ATCC 204508 / S288c) (Baker's yeast) protein is Dolichyl-phosphate-mannose--protein mannosyltransferase 5.